A 289-amino-acid chain; its full sequence is 4-hydroxy-3-methylbut-2-enyl diphosphate reductase (289 aa).

Residue cysteine 12 coordinates [4Fe-4S] cluster. Residues histidine 41 and histidine 84 each contribute to the (2E)-4-hydroxy-3-methylbut-2-enyl diphosphate site. The dimethylallyl diphosphate site is built by histidine 41 and histidine 84. Residues histidine 41 and histidine 84 each coordinate isopentenyl diphosphate. A [4Fe-4S] cluster-binding site is contributed by cysteine 106. Histidine 134 contacts (2E)-4-hydroxy-3-methylbut-2-enyl diphosphate. Histidine 134 lines the dimethylallyl diphosphate pocket. Histidine 134 contacts isopentenyl diphosphate. Glutamate 136 (proton donor) is an active-site residue. A (2E)-4-hydroxy-3-methylbut-2-enyl diphosphate-binding site is contributed by serine 172. A [4Fe-4S] cluster-binding site is contributed by cysteine 200. (2E)-4-hydroxy-3-methylbut-2-enyl diphosphate-binding residues include serine 229, asparagine 231, and serine 273. Residues serine 229, asparagine 231, and serine 273 each coordinate dimethylallyl diphosphate. Isopentenyl diphosphate is bound by residues serine 229, asparagine 231, and serine 273.

This sequence belongs to the IspH family. [4Fe-4S] cluster serves as cofactor.

It catalyses the reaction isopentenyl diphosphate + 2 oxidized [2Fe-2S]-[ferredoxin] + H2O = (2E)-4-hydroxy-3-methylbut-2-enyl diphosphate + 2 reduced [2Fe-2S]-[ferredoxin] + 2 H(+). The enzyme catalyses dimethylallyl diphosphate + 2 oxidized [2Fe-2S]-[ferredoxin] + H2O = (2E)-4-hydroxy-3-methylbut-2-enyl diphosphate + 2 reduced [2Fe-2S]-[ferredoxin] + 2 H(+). It functions in the pathway isoprenoid biosynthesis; dimethylallyl diphosphate biosynthesis; dimethylallyl diphosphate from (2E)-4-hydroxy-3-methylbutenyl diphosphate: step 1/1. It participates in isoprenoid biosynthesis; isopentenyl diphosphate biosynthesis via DXP pathway; isopentenyl diphosphate from 1-deoxy-D-xylulose 5-phosphate: step 6/6. Catalyzes the conversion of 1-hydroxy-2-methyl-2-(E)-butenyl 4-diphosphate (HMBPP) into a mixture of isopentenyl diphosphate (IPP) and dimethylallyl diphosphate (DMAPP). Acts in the terminal step of the DOXP/MEP pathway for isoprenoid precursor biosynthesis. The polypeptide is 4-hydroxy-3-methylbut-2-enyl diphosphate reductase (Opitutus terrae (strain DSM 11246 / JCM 15787 / PB90-1)).